A 178-amino-acid polypeptide reads, in one-letter code: MLSFFKTLSMGRSGWLLLAFSALVLELVALYFQYGMQLQPCVMCVYERVALGGILFAGIIGAIAPSSWFFRFLGIIIGLGASVKGFLLALKHVDYQLNPAPWNQCAYLPEFPQTLPLDQWFPYLFKPIGSCSDIQWSFLGFSMAQWILVMFAFYSILLAIILISQVKAGKPKHREIFR.

Residues 1-14 lie on the Cytoplasmic side of the membrane; the sequence is MLSFFKTLSMGRSG. The helical transmembrane segment at 15 to 31 threads the bilayer; the sequence is WLLLAFSALVLELVALY. The Periplasmic segment spans residues 32–49; it reads FQYGMQLQPCVMCVYERV. Cysteines 41 and 44 form a disulfide. The chain crosses the membrane as a helical span at residues 50–65; the sequence is ALGGILFAGIIGAIAP. Residues 66–72 lie on the Cytoplasmic side of the membrane; sequence SSWFFRF. The chain crosses the membrane as a helical span at residues 73-90; that stretch reads LGIIIGLGASVKGFLLAL. Over 91–145 the chain is Periplasmic; that stretch reads KHVDYQLNPAPWNQCAYLPEFPQTLPLDQWFPYLFKPIGSCSDIQWSFLGFSMAQ. Cys-105 and Cys-131 are oxidised to a cystine. A helical transmembrane segment spans residues 146-164; that stretch reads WILVMFAFYSILLAIILIS. Residues 165–178 are Cytoplasmic-facing; the sequence is QVKAGKPKHREIFR.

This sequence belongs to the DsbB family.

The protein resides in the cell inner membrane. Functionally, required for disulfide bond formation in some periplasmic proteins. Acts by oxidizing the DsbA protein. This is Disulfide bond formation protein B from Mannheimia succiniciproducens (strain KCTC 0769BP / MBEL55E).